We begin with the raw amino-acid sequence, 202 residues long: uncharacterized protein (202 aa).

This is an uncharacterized protein from Dictyostelium discoideum (Social amoeba).